Here is a 405-residue protein sequence, read N- to C-terminus: Acetate kinase (405 aa).

Residue Asn-13 coordinates Mg(2+). Residue Lys-20 coordinates ATP. Arg-94 provides a ligand contact to substrate. Asp-153 (proton donor/acceptor) is an active-site residue. Residues 213 to 217 (HLGNG), 288 to 290 (DFR), and 336 to 340 (GIGEN) each bind ATP. Glu-390 is a Mg(2+) binding site.

The protein belongs to the acetokinase family. In terms of assembly, homodimer. Mg(2+) serves as cofactor. The cofactor is Mn(2+).

It localises to the cytoplasm. It catalyses the reaction acetate + ATP = acetyl phosphate + ADP. Its pathway is metabolic intermediate biosynthesis; acetyl-CoA biosynthesis; acetyl-CoA from acetate: step 1/2. In terms of biological role, catalyzes the formation of acetyl phosphate from acetate and ATP. Can also catalyze the reverse reaction. The polypeptide is Acetate kinase (Buchnera aphidicola subsp. Acyrthosiphon pisum (strain APS) (Acyrthosiphon pisum symbiotic bacterium)).